Consider the following 338-residue polypeptide: Probable cytosolic iron-sulfur protein assembly protein Ciao1 (338 aa).

8 WD repeats span residues 12–51 (GHRGRVWGAGWHPRDPVLATCGEDKTIRIWADDGTGRWVP), 58–97 (GHTRTIRDVAWSPCGRFLASASFDATVAIWDRRSGEFECN), 102–141 (GHENEVKSVSWSKSGALLATCSRDKSVWIWEVAQEDEYEC), 147–186 (THSQDVKKVEWHPNEDVLASASYDNTIQLYREDLADSDWS), 193–232 (SHDSTVWSIAFDASGSRLASCSDDQTVRIWQEYKPGNEFG), 234–252 (ACPDGKTPVWKCVCTLSGF), 253–291 (HSRAVYDISWCKKTGLIATACGDDMVRIFREVAGSPANE), and 302–338 (AHSQDANTVEWSPTVAGLLVTTSDDGDVKLWKFEDDE).

This sequence belongs to the WD repeat CIA1 family.

Essential component of the cytosolic iron-sulfur (Fe/S) protein assembly machinery. Required for the maturation of extramitochondrial Fe/S proteins. This is Probable cytosolic iron-sulfur protein assembly protein Ciao1 from Culex quinquefasciatus (Southern house mosquito).